The sequence spans 98 residues: NADH-ubiquinone oxidoreductase chain 4L (98 aa).

3 helical membrane passes run 1–21 (MTLI…GLLM), 29–49 (ALLC…LTIL), and 61–81 (IILL…LVMV).

This sequence belongs to the complex I subunit 4L family. Core subunit of respiratory chain NADH dehydrogenase (Complex I) which is composed of 45 different subunits.

It is found in the mitochondrion inner membrane. The catalysed reaction is a ubiquinone + NADH + 5 H(+)(in) = a ubiquinol + NAD(+) + 4 H(+)(out). Functionally, core subunit of the mitochondrial membrane respiratory chain NADH dehydrogenase (Complex I) which catalyzes electron transfer from NADH through the respiratory chain, using ubiquinone as an electron acceptor. Part of the enzyme membrane arm which is embedded in the lipid bilayer and involved in proton translocation. This chain is NADH-ubiquinone oxidoreductase chain 4L (MT-ND4L), found in Balaenoptera borealis (Sei whale).